Here is a 63-residue protein sequence, read N- to C-terminus: Insect toxin TbIT-1 (63 aa).

One can recognise an LCN-type CS-alpha/beta domain in the interval 2–63; sequence KEGYPVDSRG…VYDNASNKCB (62 aa). 4 cysteine pairs are disulfide-bonded: C12–C62, C16–C38, C24–C43, and C28–C45.

Belongs to the long (4 C-C) scorpion toxin superfamily. Sodium channel inhibitor family. Beta subfamily. In terms of tissue distribution, expressed by the venom gland.

The protein localises to the secreted. Functionally, beta toxins bind voltage-independently at site-4 of sodium channels (Nav) and shift the voltage of activation toward more negative potentials thereby affecting sodium channel activation and promoting spontaneous and repetitive firing. This toxin is only active against insects. The sequence is that of Insect toxin TbIT-1 from Tityus bahiensis (Brazilian scorpion).